The chain runs to 296 residues: 4-hydroxy-tetrahydrodipicolinate synthase (296 aa).

Thr47 lines the pyruvate pocket. Tyr135 serves as the catalytic Proton donor/acceptor. Lys164 serves as the catalytic Schiff-base intermediate with substrate. Ile207 contributes to the pyruvate binding site.

It belongs to the DapA family. Homotetramer; dimer of dimers.

The protein resides in the cytoplasm. The enzyme catalyses L-aspartate 4-semialdehyde + pyruvate = (2S,4S)-4-hydroxy-2,3,4,5-tetrahydrodipicolinate + H2O + H(+). It functions in the pathway amino-acid biosynthesis; L-lysine biosynthesis via DAP pathway; (S)-tetrahydrodipicolinate from L-aspartate: step 3/4. Catalyzes the condensation of (S)-aspartate-beta-semialdehyde [(S)-ASA] and pyruvate to 4-hydroxy-tetrahydrodipicolinate (HTPA). In Karelsulcia muelleri (strain GWSS) (Sulcia muelleri), this protein is 4-hydroxy-tetrahydrodipicolinate synthase.